The following is a 1193-amino-acid chain: K(+) efflux antiporter 1, chloroplastic (1193 aa).

The N-terminal 49 residues, 1-49, are a transit peptide targeting the chloroplast; sequence MEYASTFQRPILFHGGDGASYCFPNRLISPKGISITSGDSKVHSCFRLR. The Stromal portion of the chain corresponds to 50 to 585; the sequence is RNVAQSGTLN…MIPHQEVNEE (536 aa). Residues 103-135 are disordered; that stretch reads SLGNADSNDHRIGESSESSDETEATDLKDARVE. Residues 131–355 are a coiled coil; that stretch reads DARVENDTDS…RAEKSLSISQ (225 aa). N6-acetyllysine; by NSI is present on Lys168. Positions 351-364 are enriched in polar residues; the sequence is LSISQTPEETQGQL. Disordered regions lie at residues 351–372 and 421–474; these read LSISQTPEETQGQLSDEETSQE and QPYE…NSPK. Residues 439-465 are compositionally biased toward basic and acidic residues; that stretch reads KVVEADSEKPKINVQTKKQETQKDLPK. Residues 586 to 606 form a helical membrane-spanning segment; sequence EASLFDFLWLLLASVIFVPLF. Residues 607–612 are Chloroplast intermembrane-facing; it reads QKIPGG. The helical transmembrane segment at 613-633 threads the bilayer; that stretch reads SPVLGYLAAGILIGPYGLSII. Residues 634–640 are Stromal-facing; sequence RNVHGTR. A helical transmembrane segment spans residues 641 to 661; sequence AIAEFGVVFLLFNIGLELSVE. Residues 662–668 lie on the Chloroplast intermembrane side of the membrane; sequence RLSSMKK. A helical membrane pass occupies residues 669 to 689; it reads YVFGLGSAQVLVTAAVVGLLA. Residues 690–698 are Stromal-facing; sequence HYVAGQAGP. The chain crosses the membrane as a helical span at residues 699–719; the sequence is AAIVIGNGLALSSTAVVLQVL. At 720-733 the chain is on the chloroplast intermembrane side; sequence QERGESTSRHGRAS. A helical transmembrane segment spans residues 734–754; sequence FSVLLFQDLAVVVLLILIPLI. Residues 755 to 766 are Stromal-facing; it reads SPNSSKGGIGFQ. A helical transmembrane segment spans residues 767–787; sequence AIAEALGLAAVKAAVAITAII. Residues 788–827 lie on the Chloroplast intermembrane side of the membrane; it reads AGGRLLLRPIYKQIAENRNAEIFSANTLLVILGTSLLTAR. The helical transmembrane segment at 828–848 threads the bilayer; that stretch reads AGLSMALGAFLAGLLLAETEF. The Stromal portion of the chain corresponds to 849–860; it reads SLQVESDIAPYR. The chain crosses the membrane as a helical span at residues 861 to 881; it reads GLLLGLFFMTVGMSIDPKLLL. The Chloroplast intermembrane segment spans residues 882-883; that stretch reads SN. Residues 884–904 form a helical membrane-spanning segment; the sequence is FPVIVGTLGLLIVGKTMLVVI. The Stromal segment spans residues 905-912; the sequence is MGKLFGIS. A helical membrane pass occupies residues 913-933; it reads IISAIRVGLLLAPGGEFAFVA. The Chloroplast intermembrane segment spans residues 934 to 948; sequence FGEAVNQGIMSPQLS. Residues 949-969 form a helical membrane-spanning segment; sequence SLLFLVVGISMAITPWLAAGG. The Stromal segment spans residues 970–1193; sequence QLIASRFELH…QIIEGGTVVI (224 aa). One can recognise an RCK N-terminal domain in the interval 995 to 1112; the sequence is QGHIIICGFG…EKAGATAVVP (118 aa). Residues 1165–1184 are disordered; that stretch reads GYSRTSKPKPQPSDASGDNQ.

The protein belongs to the monovalent cation:proton antiporter 2 (CPA2) transporter (TC 2.A.37) family. KEA (TC 2.A.37.1) subfamily. Post-translationally, acetylated at Lys-168 by the stromal acetyltransferase enzyme NSI. Expressed in shoots and roots. Mainly localized to leaf veins, hypocotyls, mesophylls and guard cells. Accumulates at high levels in small and dividing plastids (at protein level).

The protein localises to the plastid. Its subcellular location is the chloroplast inner membrane. The catalysed reaction is K(+)(in) + H(+)(out) = K(+)(out) + H(+)(in). With respect to regulation, repressed by sodium ions Na(+). In terms of biological role, electroneutral K(+)/H(+) efflux antiporter involved in chloroplastic K(+) homeostasis and osmotic adjustment, especially during plastid division and thylakoid membrane formation. Collaboratively with KEA2, adjusts alkaline stromal pH upon light to dark transitions in plastids. Together with KEA2, critical for chloroplast development, including chloroplast RNA-metabolism (e.g. rRNA maturation, polysome loading and RNA-protein interactions) and plastid gene expression (PGE), ion homeostasis, and photosynthesis. Contributes, during early seedling development, to the regulation of photosynthesis and abscisic acid- (ABA-) mediated primary root growth in a sucrose-dependent manner. Involved in the regulation of reactive oxygen and nitrogen species (ROS and RNS) metabolism. Required in roots for rapid hyperosmotic-induced Ca(2+) responses and for osmo-sensory potentiation in hyperosmotic conditions. May counteract resilience to drought and salt stress, involving photorespiratory pathway and stomata closure. This Arabidopsis thaliana (Mouse-ear cress) protein is K(+) efflux antiporter 1, chloroplastic.